The primary structure comprises 1231 residues: Pesticidal crystal protein Cry1Bd (1231 aa).

This sequence belongs to the delta endotoxin family.

Its function is as follows. Promotes colloidosmotic lysis by binding to the midgut epithelial cells of lepidopteran larvae. Toxic to Plutella xylostella. This chain is Pesticidal crystal protein Cry1Bd (cry1Bd), found in Bacillus thuringiensis subsp. wuhanensis.